Here is an 82-residue protein sequence, read N- to C-terminus: MGGISIWQLLIIAVIIVLLFGTKKLRGVGSDLGSAVKGFKKAISEDEPAKDAKKDADFVPQNLEKKEAETVEKQKQNDKEQA.

Residues 1 to 21 (MGGISIWQLLIIAVIIVLLFG) traverse the membrane as a helical segment. Residues 46–82 (DEPAKDAKKDADFVPQNLEKKEAETVEKQKQNDKEQA) form a disordered region.

This sequence belongs to the TatA/E family. As to quaternary structure, the Tat system comprises two distinct complexes: a TatABC complex, containing multiple copies of TatA, TatB and TatC subunits, and a separate TatA complex, containing only TatA subunits. Substrates initially bind to the TatABC complex, which probably triggers association of the separate TatA complex to form the active translocon.

It is found in the cell inner membrane. Its function is as follows. Part of the twin-arginine translocation (Tat) system that transports large folded proteins containing a characteristic twin-arginine motif in their signal peptide across membranes. TatA could form the protein-conducting channel of the Tat system. This Aliivibrio fischeri (strain MJ11) (Vibrio fischeri) protein is Sec-independent protein translocase protein TatA.